The chain runs to 347 residues: Dihydroorotase (347 aa).

Zn(2+)-binding residues include His14 and His16. Residues 16–18 (HLR) and Asn42 contribute to the substrate site. Zn(2+) contacts are provided by Lys100, His137, and His175. At Lys100 the chain carries N6-carboxylysine. His137 is a substrate binding site. Leu220 serves as a coordination point for substrate. Asp248 is a Zn(2+) binding site. The active site involves Asp248. 2 residues coordinate substrate: His252 and Ala264.

Belongs to the metallo-dependent hydrolases superfamily. DHOase family. Class II DHOase subfamily. In terms of assembly, homodimer. The cofactor is Zn(2+).

It carries out the reaction (S)-dihydroorotate + H2O = N-carbamoyl-L-aspartate + H(+). It participates in pyrimidine metabolism; UMP biosynthesis via de novo pathway; (S)-dihydroorotate from bicarbonate: step 3/3. Functionally, catalyzes the reversible cyclization of carbamoyl aspartate to dihydroorotate. This Jannaschia sp. (strain CCS1) protein is Dihydroorotase.